We begin with the raw amino-acid sequence, 764 residues long: FAST kinase domain-containing protein 5, mitochondrial (764 aa).

The transit peptide at 1 to 27 (MAATLKSLKLVRYRAFCSPSAFGAVRS) directs the protein to the mitochondrion. Phosphoserine is present on serine 95. Lysine 507 is modified (N6-acetyllysine). An RAP domain is found at 697–757 (LAVQFTNRNQ…RLEKLAFLHE (61 aa)).

It belongs to the FAST kinase family. Found in a complex with GRSF1, DDX28, DHX30 and FASTKD2. Associates with the 12S mitochondrial rRNA (12S mt-rRNA). Expression detected in spleen, thymus, testis, ovary, colon, heart, smooth muscle, kidney, brain, lung, liver and white adipose tissue with highest expression in heart, smooth muscle, liver and thyroid.

It localises to the mitochondrion matrix. It is found in the mitochondrion nucleoid. Plays an important role in the processing of non-canonical mitochondrial mRNA precursors. This Homo sapiens (Human) protein is FAST kinase domain-containing protein 5, mitochondrial (FASTKD5).